Consider the following 331-residue polypeptide: Tagatose 1,6-diphosphate aldolase 2 (331 aa).

It belongs to the aldolase LacD family.

It catalyses the reaction D-tagatofuranose 1,6-bisphosphate = D-glyceraldehyde 3-phosphate + dihydroxyacetone phosphate. It participates in carbohydrate metabolism; D-tagatose 6-phosphate degradation; D-glyceraldehyde 3-phosphate and glycerone phosphate from D-tagatose 6-phosphate: step 2/2. In Enterococcus faecalis (strain ATCC 700802 / V583), this protein is Tagatose 1,6-diphosphate aldolase 2 (lacD2).